Here is a 311-residue protein sequence, read N- to C-terminus: Progestin and adipoQ receptor family member 3 (311 aa).

The interval 1-20 (MHQKLLKSAHYIELGSYQYW) is required for interaction with SREBF2. Topologically, residues 1–73 (MHQKLLKSAH…FILSNETVNI (73 aa)) are cytoplasmic. Residues 41 to 60 (KDNPYITDGYRAYLPSRLCI) are required for interaction with SCAP. The golgi targeting stretch occupies residues 61–71 (KSLFILSNETV). Residues 74–96 (WSHLLGFFLFFTLGIYDMTSVLP) form a helical membrane-spanning segment. Residues 97-105 (SASASREDF) are Lumenal-facing. Residues 106-128 (VICSICLFCFQVCMLCSVGYHLF) traverse the membrane as a helical segment. Over 129–140 (SCHRSEKTCRRW) the chain is Cytoplasmic. The helical transmembrane segment at 141–163 (MALDYAGISIGILGCYVSGVFYA) threads the bilayer. The Lumenal portion of the chain corresponds to 164–172 (FYCNNYWRQ). Residues 173–195 (VYLITVLAMILAVFFAQIHPNYL) traverse the membrane as a helical segment. Topologically, residues 196–201 (TQQWQR) are cytoplasmic. A helical transmembrane segment spans residues 202-224 (LRSIIFCSVSGYGVIPTLHWVWL). Residues 225 to 238 (NGGIGAPIVQDFAP) lie on the Lumenal side of the membrane. The chain crosses the membrane as a helical span at residues 239-256 (RVIVMYMIALLAFLFYIS). Residues 257-275 (KVPERYFPGQLNYLGSSHQ) lie on the Cytoplasmic side of the membrane. Residues 276-298 (IWHILAVVMLYWWHQSTVYVMQY) traverse the membrane as a helical segment. The golgi targeting stretch occupies residues 299 to 303 (RHSKP). At 299–311 (RHSKPCPDYVSHL) the chain is on the lumenal side.

It belongs to the ADIPOR family. In terms of assembly, interacts with SCAP and SREBF2; the interactions are direct, increase in low cholesterol conditions and tether SCAP:SREBP complex to the Golgi apparatus. Interaction with SCAP is mutually exclusive with INSIG1. In hepatocytes, interacts with PPARA and HUWE1; the interactions promote PPARA poylubiquitination and HUWE1-mediated degradation. In macrophages, interacts with PPARG and STUB1; the interactions promote PPARG poylubiquitination and STUB1-mediated degradation. As to expression, widely expressed in a range of tissues.

It is found in the golgi apparatus membrane. Functionally, golgi-scaffold protein which modulates its interactors acitivies by anchoring them to the Golgi apparatus. Functions as a spatial regulator of RAF1 kinase by sequestrating it to the Golgi apparatus. Acts as a positive regulator of cholesterol biosynthesis by mediating the anchoring of the SCAP:SREBP complex in the Golgi apparatus, thereby promoting SCAP:SREBF2 complex formation, potentiating SREBF2 and SREBF1 processing and enhancing lipid synthesis. Also regulates PPARA and PPARG functions by mediating their interaction with E3 ubiquitin ligases, such as STUB1 or HUWE1, leading to their polyubiquitination and proteasome-mediated degradation. The chain is Progestin and adipoQ receptor family member 3 from Homo sapiens (Human).